A 212-amino-acid polypeptide reads, in one-letter code: Ribosomal RNA small subunit methyltransferase G (212 aa).

S-adenosyl-L-methionine contacts are provided by residues Phe-78, Glu-96–Ser-98, Val-124–Glu-125, and Arg-141.

This sequence belongs to the methyltransferase superfamily. RNA methyltransferase RsmG family.

The protein localises to the cytoplasm. In terms of biological role, specifically methylates the N7 position of a guanine in 16S rRNA. The protein is Ribosomal RNA small subunit methyltransferase G of Onion yellows phytoplasma (strain OY-M).